The following is a 570-amino-acid chain: 4-coumarate--CoA ligase 4 (570 aa).

Positions 218, 219, 220, 221, 222, and 226 each coordinate ATP. Position 268 (Tyr-268) interacts with (E)-4-coumaroyl-AMP. Arg-289 is a CoA binding site. The SBD1 stretch occupies residues 291-360 (ELNLVMELIQ…LKFPNAIFGQ (70 aa)). (E)-4-coumaroyl-AMP-binding residues include Ala-338, Gln-360, Gly-361, and Thr-365. The ATP site is built by Gln-360, Gly-361, Thr-365, Asp-448, and Arg-463. The interval 361–427 (GYGMTESGTV…VRGHQLMKGY (67 aa)) is SBD2. (E)-4-coumaroyl-AMP-binding residues include Lys-465 and Lys-469. The CoA site is built by Lys-471 and Gly-472. ATP is bound at residue Lys-554.

This sequence belongs to the ATP-dependent AMP-binding enzyme family. It depends on Mg(2+) as a cofactor.

It catalyses the reaction (E)-sinapate + ATP + CoA = (E)-sinapoyl-CoA + AMP + diphosphate. It carries out the reaction (E)-4-coumarate + ATP + CoA = (E)-4-coumaroyl-CoA + AMP + diphosphate. The catalysed reaction is (E)-caffeate + ATP + CoA = (E)-caffeoyl-CoA + AMP + diphosphate. The enzyme catalyses (E)-ferulate + ATP + CoA = (E)-feruloyl-CoA + AMP + diphosphate. It catalyses the reaction (E)-sinapate + ATP + H(+) = (E)-sinapoyl-AMP + diphosphate. It carries out the reaction (E)-sinapoyl-AMP + CoA = (E)-sinapoyl-CoA + AMP + H(+). The catalysed reaction is (E)-4-coumarate + ATP + H(+) = (E)-4-coumaroyl-AMP + diphosphate. The enzyme catalyses (E)-4-coumaroyl-AMP + CoA = (E)-4-coumaroyl-CoA + AMP + H(+). It catalyses the reaction (E)-caffeate + ATP + H(+) = (E)-caffeoyl-AMP + diphosphate. It carries out the reaction (E)-caffeoyl-AMP + CoA = (E)-caffeoyl-CoA + AMP + H(+). The catalysed reaction is (E)-ferulate + ATP + H(+) = (E)-feruloyl-AMP + diphosphate. The enzyme catalyses (E)-feruloyl-AMP + CoA = (E)-feruloyl-CoA + AMP + H(+). It functions in the pathway phytoalexin biosynthesis; 3,4',5-trihydroxystilbene biosynthesis; 3,4',5-trihydroxystilbene from trans-4-coumarate: step 1/2. Produces CoA thioesters of a variety of hydroxy- and methoxy-substituted cinnamic acids, which are used to synthesize several phenylpropanoid-derived compounds, including anthocyanins, flavonoids, isoflavonoids, coumarins, lignin, suberin and wall-bound phenolics. Follows a two-step reaction mechanism, wherein the carboxylate substrate first undergoes adenylation by ATP, followed by a thioesterification in the presence of CoA to yield the final CoA thioesters. This is 4-coumarate--CoA ligase 4 from Arabidopsis thaliana (Mouse-ear cress).